Consider the following 374-residue polypeptide: Conserved virulence factor C (374 aa).

It belongs to the CvfC family.

Its function is as follows. Required for hemolysin production. This is Conserved virulence factor C (cvfC) from Staphylococcus aureus (strain USA300).